The following is a 455-amino-acid chain: Hexokinase-2 (455 aa).

A Hexokinase domain is found at 3-445 (ANFQQAVKKL…SGIGAALCAL (443 aa)). Positions 57–195 (TGAETGDFLA…NLPIRIEAVI (139 aa)) are hexokinase small subdomain. Residue 68 to 73 (DFGGTN) coordinates ATP. Residues 144 to 145 (SY), 161 to 162 (TK), and 196 to 197 (ND) contribute to the substrate site. Residues 196–434 (NDTVGTLVTR…KLISIGIAKD (239 aa)) form a hexokinase large subdomain region. Residue Thr-222 coordinates ATP. Substrate is bound by residues Asn-225, Glu-252, and Glu-283. ATP is bound by residues 288–289 (GM), 325–329 (TSVLS), and 400–404 (SLVEH).

It belongs to the hexokinase family. As to quaternary structure, monomer.

The catalysed reaction is a D-hexose + ATP = a D-hexose 6-phosphate + ADP + H(+). The enzyme catalyses D-mannose + ATP = D-mannose 6-phosphate + ADP + H(+). It carries out the reaction D-fructose + ATP = D-fructose 6-phosphate + ADP + H(+). It catalyses the reaction D-glucose + ATP = D-glucose 6-phosphate + ADP + H(+). Its pathway is carbohydrate metabolism; hexose metabolism. It participates in carbohydrate degradation; glycolysis; D-glyceraldehyde 3-phosphate and glycerone phosphate from D-glucose: step 1/4. Its function is as follows. Catalyzes the phosphorylation of hexose (six-carbon sugars) to hexose 6-phosphate. Phosphorylates D-glucose, D-fructose and D-mannose. Compared to hxk1, has a much higher affinity for D-glucose. Constitutes the initial enzyme of glycolysis by catalyzing the phosphorylation of glucose to D-glucose 6-phosphate. This Schizosaccharomyces pombe (strain 972 / ATCC 24843) (Fission yeast) protein is Hexokinase-2.